Here is a 195-residue protein sequence, read N- to C-terminus: NADH-ubiquinone oxidoreductase subunit 9 (195 aa).

It belongs to the complex I 30 kDa subunit family. As to quaternary structure, complex I is composed of about 30 different subunits.

The protein localises to the mitochondrion inner membrane. It carries out the reaction a ubiquinone + NADH + 5 H(+)(in) = a ubiquinol + NAD(+) + 4 H(+)(out). Functionally, core subunit of the mitochondrial membrane respiratory chain NADH dehydrogenase (Complex I) that is believed to belong to the minimal assembly required for catalysis. Complex I functions in the transfer of electrons from NADH to the respiratory chain. The immediate electron acceptor for the enzyme is believed to be ubiquinone. The sequence is that of NADH-ubiquinone oxidoreductase subunit 9 (NAD9) from Acanthamoeba castellanii (Amoeba).